The chain runs to 308 residues: 1D-myo-inositol 2-acetamido-2-deoxy-alpha-D-glucopyranoside deacetylase (308 aa).

Zn(2+) is bound by residues His18, Asp21, and His153.

The protein belongs to the MshB deacetylase family. Zn(2+) serves as cofactor.

It carries out the reaction 1D-myo-inositol 2-acetamido-2-deoxy-alpha-D-glucopyranoside + H2O = 1D-myo-inositol 2-amino-2-deoxy-alpha-D-glucopyranoside + acetate. In terms of biological role, catalyzes the deacetylation of 1D-myo-inositol 2-acetamido-2-deoxy-alpha-D-glucopyranoside (GlcNAc-Ins) in the mycothiol biosynthesis pathway. This is 1D-myo-inositol 2-acetamido-2-deoxy-alpha-D-glucopyranoside deacetylase from Salinispora arenicola (strain CNS-205).